The primary structure comprises 465 residues: Probable Xaa-Pro aminopeptidase pepP (465 aa).

Residues Asp261, Asp272, Glu395, and Glu435 each contribute to the Mn(2+) site.

Belongs to the peptidase M24B family. Mn(2+) serves as cofactor.

The enzyme catalyses Release of any N-terminal amino acid, including proline, that is linked to proline, even from a dipeptide or tripeptide.. In terms of biological role, catalyzes the removal of a penultimate prolyl residue from the N-termini of peptides. This is Probable Xaa-Pro aminopeptidase pepP (pepP) from Talaromyces marneffei (strain ATCC 18224 / CBS 334.59 / QM 7333) (Penicillium marneffei).